Reading from the N-terminus, the 449-residue chain is Agmatine hydroxycinnamoyltransferase 1 (449 aa).

Catalysis depends on proton acceptor residues histidine 153 and aspartate 392.

The protein belongs to the plant acyltransferase family. Highly expressed in roots. Expressed at low levels in flowers.

Its function is as follows. Hydroxycinnamoyl transferase that catalyzes the transfer of an acyl from p-coumaryol-CoA to agmatine, to produce coumaroyl agmatine. Can use feruloyl-CoA, caffeoyl-CoA and sinapoyl-CoA as acyl donors. Seems to be able to transfer the acyl group from p-coumaroyl-CoA and feruloyl-CoA to the acyl acceptors putrescine and spermidine. This Oryza sativa subsp. japonica (Rice) protein is Agmatine hydroxycinnamoyltransferase 1.